We begin with the raw amino-acid sequence, 143 residues long: uncharacterized protein (143 aa).

Residues 1-27 (MSDEIARLVADVFELAGLLRRSGEVVA) form the signal peptide.

This is an uncharacterized protein from Mycobacterium tuberculosis (strain CDC 1551 / Oshkosh).